A 293-amino-acid polypeptide reads, in one-letter code: Ribosomal protein L11 methyltransferase (293 aa).

S-adenosyl-L-methionine-binding residues include Thr145, Gly166, Asp188, and Asn230.

This sequence belongs to the methyltransferase superfamily. PrmA family.

It localises to the cytoplasm. It catalyses the reaction L-lysyl-[protein] + 3 S-adenosyl-L-methionine = N(6),N(6),N(6)-trimethyl-L-lysyl-[protein] + 3 S-adenosyl-L-homocysteine + 3 H(+). In terms of biological role, methylates ribosomal protein L11. This chain is Ribosomal protein L11 methyltransferase, found in Yersinia pseudotuberculosis serotype O:3 (strain YPIII).